The following is a 380-amino-acid chain: tRNA-specific 2-thiouridylase MnmA (380 aa).

ATP-binding positions include 26 to 33 and Leu52; that span reads AMSGGVDS. Cys120 acts as the Nucleophile in catalysis. The cysteines at positions 120 and 217 are disulfide-linked. Gly144 is a binding site for ATP. The segment at 166 to 168 is interaction with tRNA; the sequence is RDQ. Cys217 serves as the catalytic Cysteine persulfide intermediate.

This sequence belongs to the MnmA/TRMU family.

The protein resides in the cytoplasm. It carries out the reaction S-sulfanyl-L-cysteinyl-[protein] + uridine(34) in tRNA + AH2 + ATP = 2-thiouridine(34) in tRNA + L-cysteinyl-[protein] + A + AMP + diphosphate + H(+). Functionally, catalyzes the 2-thiolation of uridine at the wobble position (U34) of tRNA, leading to the formation of s(2)U34. The chain is tRNA-specific 2-thiouridylase MnmA from Jannaschia sp. (strain CCS1).